We begin with the raw amino-acid sequence, 73 residues long: Alpha-amylase inhibitor Paim-1 (73 aa).

Disulfide bonds link C8–C24 and C42–C70.

In terms of biological role, inhibits mammalian alpha-amylases specifically but has no action on plant and microbial alpha-amylases. The protein is Alpha-amylase inhibitor Paim-1 of Streptomyces olivaceoviridis (Streptomyces corchorusii).